The sequence spans 444 residues: Glutamate--tRNA ligase 1 (444 aa).

Residues 7–17 (PSPTGYLHVGN) carry the 'HIGH' region motif. The 'KMSKS' region motif lies at 238-242 (KISKR). Lys-241 serves as a coordination point for ATP.

The protein belongs to the class-I aminoacyl-tRNA synthetase family. Glutamate--tRNA ligase type 1 subfamily. As to quaternary structure, monomer.

The protein localises to the cytoplasm. It carries out the reaction tRNA(Glu) + L-glutamate + ATP = L-glutamyl-tRNA(Glu) + AMP + diphosphate. Catalyzes the attachment of glutamate to tRNA(Glu) in a two-step reaction: glutamate is first activated by ATP to form Glu-AMP and then transferred to the acceptor end of tRNA(Glu). The chain is Glutamate--tRNA ligase 1 from Wolbachia pipientis subsp. Culex pipiens (strain wPip).